An 84-amino-acid chain; its full sequence is Small ribosomal subunit protein bS16 (84 aa).

It belongs to the bacterial ribosomal protein bS16 family.

The sequence is that of Small ribosomal subunit protein bS16 from Ralstonia pickettii (strain 12J).